The sequence spans 290 residues: ATP phosphoribosyltransferase (290 aa).

Belongs to the ATP phosphoribosyltransferase family. Long subfamily. It depends on Mg(2+) as a cofactor.

Its subcellular location is the cytoplasm. It carries out the reaction 1-(5-phospho-beta-D-ribosyl)-ATP + diphosphate = 5-phospho-alpha-D-ribose 1-diphosphate + ATP. The protein operates within amino-acid biosynthesis; L-histidine biosynthesis; L-histidine from 5-phospho-alpha-D-ribose 1-diphosphate: step 1/9. Feedback inhibited by histidine. Its function is as follows. Catalyzes the condensation of ATP and 5-phosphoribose 1-diphosphate to form N'-(5'-phosphoribosyl)-ATP (PR-ATP). Has a crucial role in the pathway because the rate of histidine biosynthesis seems to be controlled primarily by regulation of HisG enzymatic activity. This chain is ATP phosphoribosyltransferase (hisG), found in Saccharolobus solfataricus (strain ATCC 35092 / DSM 1617 / JCM 11322 / P2) (Sulfolobus solfataricus).